The primary structure comprises 278 residues: MEPFGARLRRAMDERGPLCVGIDPHASLLAEWGLNDDVAGLERFSRTVVEAMADRVAVLKPQSAFFERFGSRGVAVLETTVQEARAAGALVVMDAKRGDIGSTMAAYAESFLHKDAPLFSDALTVSPYLGYGSLKPAVDLARESGAGLFVLALTSNPEGGEVQHAVRGDGRSVGATMLAHLAAENAGEEPLGSFGAVVGATLGDLSSYDLGINGPLLAPGIGAQGATPADLPRVFGAALRNVVPNVSRGVLRHGPDVTALRTAADRFAVEIRTAVTAS.

The active-site Proton donor is K96.

Belongs to the OMP decarboxylase family. Type 2 subfamily.

The catalysed reaction is orotidine 5'-phosphate + H(+) = UMP + CO2. It functions in the pathway pyrimidine metabolism; UMP biosynthesis via de novo pathway; UMP from orotate: step 2/2. The sequence is that of Orotidine 5'-phosphate decarboxylase (pyrF) from Streptomyces coelicolor (strain ATCC BAA-471 / A3(2) / M145).